Here is a 120-residue protein sequence, read N- to C-terminus: Putative 15 kDa capsid protein (120 aa).

It localises to the virion. The sequence is that of Putative 15 kDa capsid protein (P15) from Orgyia pseudotsugata (Douglas-fir tussock moth).